We begin with the raw amino-acid sequence, 297 residues long: Ribosomal protein L11 methyltransferase (297 aa).

Threonine 152, glycine 173, aspartate 195, and asparagine 234 together coordinate S-adenosyl-L-methionine.

The protein belongs to the methyltransferase superfamily. PrmA family.

It localises to the cytoplasm. The catalysed reaction is L-lysyl-[protein] + 3 S-adenosyl-L-methionine = N(6),N(6),N(6)-trimethyl-L-lysyl-[protein] + 3 S-adenosyl-L-homocysteine + 3 H(+). In terms of biological role, methylates ribosomal protein L11. The polypeptide is Ribosomal protein L11 methyltransferase (Cupriavidus taiwanensis (strain DSM 17343 / BCRC 17206 / CCUG 44338 / CIP 107171 / LMG 19424 / R1) (Ralstonia taiwanensis (strain LMG 19424))).